A 440-amino-acid polypeptide reads, in one-letter code: MTHVSRRKFLFTTGAAAAASILVHGCTSNGSQSATTGEQAPSAAPAANVSAANAPKVETTKAKLGFIPLTDAAPLIIAKEKGFFAKYGMTDIEVIKQKSWPVTRDNLKIGSSGGGIDGAHILSPMPYLMTINDKVPMYILARLNTNGQAISVAEKFKELNVNLESKSLKDAAIKAKADKKALKMGITFPGGTHDLWMRYWLAAGGINPDQDVVLEAVPPPQMVANMKVNTVDGFCVGEPWNAQLVNQKIGYSALVTGELWKDHPEKAFSMRQDWIEQNPNAAQAILMAILEAQQWCDKAENKEEMCKICSDRKYFNVAAADIIERAKGNIDYGDGRKEQNFAHRMKFWADNASYPYKSHDIWFLTEDIRWGYLPKDTKVQDIVNQVNKEDLWKKAAKAIGVADAEIPASSSRGVETFFDGVKFDPEKPEEYLNSLKIKKV.

A signal peptide spans 1–25; the sequence is MTHVSRRKFLFTTGAAAAASILVHG. Cys-26 carries the N-palmitoyl cysteine lipid modification. A lipid anchor (S-diacylglycerol cysteine) is attached at Cys-26. Residues 30–39 are compositionally biased toward polar residues; it reads GSQSATTGEQ. Residues 30 to 51 are disordered; sequence GSQSATTGEQAPSAAPAANVSA. Over residues 40–51 the composition is skewed to low complexity; that stretch reads APSAAPAANVSA. 5 residues coordinate nitrate: Trp-100, Gln-148, His-193, Gly-237, and Lys-266.

The protein belongs to the CmpA/NrtA family. As to quaternary structure, the complex is composed of two ATP-binding proteins (NrtC and NrtD), two transmembrane proteins (NrtB) and a solute-binding protein (NrtA).

It is found in the cell inner membrane. Functionally, part of the ABC transporter complex NrtABCD involved in nitrate uptake. The complex is probably also involved in nitrite transport. NrtA is the substrate-binding protein. The protein is Nitrate/nitrite binding protein NrtA (nrtA) of Nostoc sp. (strain PCC 7120 / SAG 25.82 / UTEX 2576).